The chain runs to 68 residues: Small ribosomal subunit protein bS21 (68 aa).

It belongs to the bacterial ribosomal protein bS21 family.

This is Small ribosomal subunit protein bS21 from Paracoccus denitrificans (strain Pd 1222).